The chain runs to 134 residues: Small ribosomal subunit protein uS8c (134 aa).

This sequence belongs to the universal ribosomal protein uS8 family. Part of the 30S ribosomal subunit.

It is found in the plastid. It localises to the chloroplast. In terms of biological role, one of the primary rRNA binding proteins, it binds directly to 16S rRNA central domain where it helps coordinate assembly of the platform of the 30S subunit. The chain is Small ribosomal subunit protein uS8c (rps8) from Gossypium hirsutum (Upland cotton).